The chain runs to 553 residues: Rhodopsin kinase GRK7 (553 aa).

Position 36 is a phosphoserine; by PKA (S36). The region spanning 56-176 is the RGS domain; sequence FHSLCEQQPI…VTSAFYDKFL (121 aa). Positions 191-454 constitute a Protein kinase domain; it reads FTEFRVLGKG…SDDPRKHHFF (264 aa). Residues 197–205 and K220 each bind ATP; that span reads LGKGGFGEV. D316 functions as the Proton acceptor in the catalytic mechanism. The region spanning 455–520 is the AGC-kinase C-terminal domain; sequence KTINFPRLEA…GAVPIAWQEE (66 aa). Residue C550 is modified to Cysteine methyl ester. C550 is lipidated: S-geranylgeranyl cysteine. A propeptide spans 551–553 (removed in mature form); the sequence is LLL.

This sequence belongs to the protein kinase superfamily. AGC Ser/Thr protein kinase family. GPRK subfamily. Interacts (when prenylated) with PDE6D; this promotes release from membranes. Autophosphorylated in vitro at Ser-490. Phosphorylation at Ser-36 is regulated by light and activated by cAMP. Retinal cones, outer and inner segments.

It localises to the membrane. The catalysed reaction is L-threonyl-[rhodopsin] + ATP = O-phospho-L-threonyl-[rhodopsin] + ADP + H(+). It catalyses the reaction L-seryl-[rhodopsin] + ATP = O-phospho-L-seryl-[rhodopsin] + ADP + H(+). With respect to regulation, inhibited by phosphorylation of Ser-36. In terms of biological role, retina-specific kinase involved in the shutoff of the photoresponse and adaptation to changing light conditions via cone opsin phosphorylation, including rhodopsin (RHO). The polypeptide is Rhodopsin kinase GRK7 (GRK7) (Homo sapiens (Human)).